The following is a 186-amino-acid chain: Periplasmic nitrate reductase, electron transfer subunit (186 aa).

Residues 1–20 form the signal peptide; that stretch reads MKTSKLNFLTLVASTGLALA. Positions 87, 102, 105, 106, 123, 144, 147, and 148 each coordinate heme c.

It belongs to the NapB family. As to quaternary structure, component of the periplasmic nitrate reductase NapAB complex composed of NapA and NapB. Post-translationally, binds 2 heme C groups per subunit.

It localises to the periplasm. In terms of biological role, electron transfer subunit of the periplasmic nitrate reductase complex NapAB. Transfers electrons to NapA subunit, thus allowing electron flow between membrane and periplasm. Essential for periplasmic nitrate reduction with nitrate as the terminal electron acceptor. This chain is Periplasmic nitrate reductase, electron transfer subunit, found in Wolinella succinogenes (strain ATCC 29543 / DSM 1740 / CCUG 13145 / JCM 31913 / LMG 7466 / NCTC 11488 / FDC 602W) (Vibrio succinogenes).